A 350-amino-acid chain; its full sequence is tRNA uridine(34) hydroxylase (350 aa).

The Rhodanese domain maps to 146-240; that stretch reads DDPDALFIDM…YARKAREQGL (95 aa). Residue cysteine 200 is the Cysteine persulfide intermediate of the active site.

Belongs to the TrhO family.

It catalyses the reaction uridine(34) in tRNA + AH2 + O2 = 5-hydroxyuridine(34) in tRNA + A + H2O. Catalyzes oxygen-dependent 5-hydroxyuridine (ho5U) modification at position 34 in tRNAs. The polypeptide is tRNA uridine(34) hydroxylase (Shigella flexneri serotype 5b (strain 8401)).